A 160-amino-acid chain; its full sequence is Large ribosomal subunit protein uL11 (160 aa).

This sequence belongs to the universal ribosomal protein uL11 family. Part of the ribosomal stalk of the 50S ribosomal subunit. Interacts with L10 and the large rRNA to form the base of the stalk. L10 forms an elongated spine to which L12 dimers bind in a sequential fashion forming a multimeric L10(L12)X complex.

Functionally, forms part of the ribosomal stalk which helps the ribosome interact with GTP-bound translation factors. The sequence is that of Large ribosomal subunit protein uL11 from Methanothermobacter thermautotrophicus (strain ATCC 29096 / DSM 1053 / JCM 10044 / NBRC 100330 / Delta H) (Methanobacterium thermoautotrophicum).